The chain runs to 171 residues: Voltage-dependent P/Q-type calcium channel subunit alpha-1A (171 aa).

A helical transmembrane segment spans residues 1–11 (FVTVLGSITDI). One copy of the IV repeat lies at 1-171 (FVTVLGSITD…LMLNLFVAVI (171 aa)). Topologically, residues 12–18 (LVTEFGN) are extracellular. A helical membrane pass occupies residues 19 to 37 (NFINLSFLRLFRAARLIKL). Residues 38-56 (LRQGYTIRILLWTFVQSFK) are Cytoplasmic-facing. The chain crosses the membrane as a helical span at residues 57–76 (ALPYVCLLIAMLFFIYAIIG). Residues 77 to 143 (MQVFGNIGIE…ENSGIKEDEC (67 aa)) are Extracellular-facing. Residues 144-168 (GNEFAYFYFVSFIFLCSFLMLNLFV) traverse the membrane as a helical segment. The Cytoplasmic portion of the chain corresponds to 169-171 (AVI).

It belongs to the calcium channel alpha-1 subunit (TC 1.A.1.11) family. CACNA1A subfamily. Voltage-dependent calcium channels are multisubunit complexes, consisting of alpha-1, alpha-2, beta and delta subunits in a 1:1:1:1 ratio. The channel activity is directed by the pore-forming and voltage-sensitive alpha-1 subunit. In many cases, this subunit is sufficient to generate voltage-sensitive calcium channel activity. The auxiliary subunits beta and alpha-2/delta linked by a disulfide bridge regulate the channel activity.

It is found in the cell membrane. It catalyses the reaction Ca(2+)(in) = Ca(2+)(out). In terms of biological role, the isoform alpha-1A gives rise to P and/or Q-type calcium currents. P/Q-type calcium channels belong to the 'high-voltage activated' (HVA) group. The sequence is that of Voltage-dependent P/Q-type calcium channel subunit alpha-1A (CACNA1A) from Gallus gallus (Chicken).